Consider the following 318-residue polypeptide: NADH-ubiquinone oxidoreductase chain 1 (318 aa).

The next 8 helical transmembrane spans lie at 2–22 (PMANLLLLIVPILIAMAFLML), 68–88 (ITLYITAPTLALTIALLLWTP), 100–120 (LGLLFILATSSLAVYSILWSG), 146–166 (LAIILLSTLLMSGSFNLSTLI), 171–191 (HLWLLLPSWPLAMMWFISTLA), 231–251 (IIMMNTLTTTIFLGTTYDALS), 253–273 (ELYTTYFVTKTLLLTSLFLWI), and 294–314 (LPLTLALLMWYVSMPITISSI).

This sequence belongs to the complex I subunit 1 family. Core subunit of respiratory chain NADH dehydrogenase (Complex I) which is composed of 45 different subunits.

The protein resides in the mitochondrion inner membrane. The enzyme catalyses a ubiquinone + NADH + 5 H(+)(in) = a ubiquinol + NAD(+) + 4 H(+)(out). In terms of biological role, core subunit of the mitochondrial membrane respiratory chain NADH dehydrogenase (Complex I) which catalyzes electron transfer from NADH through the respiratory chain, using ubiquinone as an electron acceptor. Essential for the catalytic activity and assembly of complex I. In Homo sapiens (Human), this protein is NADH-ubiquinone oxidoreductase chain 1 (MT-ND1).